A 65-amino-acid polypeptide reads, in one-letter code: MPKMKTNRSAAKRFRITKNGKIMRNHAYRSHKTGKKRRNTLRELRKKDVVSSTDKYRILRLLGKK.

The protein belongs to the bacterial ribosomal protein bL35 family.

The polypeptide is Large ribosomal subunit protein bL35 (Thermotoga petrophila (strain ATCC BAA-488 / DSM 13995 / JCM 10881 / RKU-1)).